A 211-amino-acid chain; its full sequence is ATP phosphoribosyltransferase (211 aa).

Belongs to the ATP phosphoribosyltransferase family. Short subfamily. In terms of assembly, heteromultimer composed of HisG and HisZ subunits.

The protein localises to the cytoplasm. The catalysed reaction is 1-(5-phospho-beta-D-ribosyl)-ATP + diphosphate = 5-phospho-alpha-D-ribose 1-diphosphate + ATP. The protein operates within amino-acid biosynthesis; L-histidine biosynthesis; L-histidine from 5-phospho-alpha-D-ribose 1-diphosphate: step 1/9. In terms of biological role, catalyzes the condensation of ATP and 5-phosphoribose 1-diphosphate to form N'-(5'-phosphoribosyl)-ATP (PR-ATP). Has a crucial role in the pathway because the rate of histidine biosynthesis seems to be controlled primarily by regulation of HisG enzymatic activity. The protein is ATP phosphoribosyltransferase of Bacillus cereus (strain 03BB102).